The sequence spans 115 residues: MKFRVDDEVIVIAGADKGHRGKILKVDRDKDKVVVEGAARVWKHVRQSQKNPQGGRLNKEMPMSASNVMLVDPSTGKPTRIGVRYLEDGSKERFAKASGESLGQIAPAKASKAAS.

Disordered stretches follow at residues 45-77 (VRQSQKNPQGGRLNKEMPMSASNVMLVDPSTGK) and 96-115 (KASGESLGQIAPAKASKAAS).

Belongs to the universal ribosomal protein uL24 family. In terms of assembly, part of the 50S ribosomal subunit.

In terms of biological role, one of two assembly initiator proteins, it binds directly to the 5'-end of the 23S rRNA, where it nucleates assembly of the 50S subunit. One of the proteins that surrounds the polypeptide exit tunnel on the outside of the subunit. This is Large ribosomal subunit protein uL24 from Rhodopirellula baltica (strain DSM 10527 / NCIMB 13988 / SH1).